Reading from the N-terminus, the 75-residue chain is Cytochrome c oxidase assembly factor 5 (75 aa).

Residues 28 to 66 (QTDCVLQEGKSPKECLKEGYCKALQVTFFECKRSILDTR) enclose the CHCH domain. A Cx10C motif motif is present at residues 31-42 (CVLQEGKSPKEC). Cystine bridges form between Cys31–Cys58 and Cys42–Cys48. The Cx9C motif motif lies at 48-58 (CKALQVTFFEC).

This sequence belongs to the PET191 family.

Its function is as follows. Involved in an early step of the mitochondrial complex IV assembly process. This chain is Cytochrome c oxidase assembly factor 5 (coa5), found in Xenopus tropicalis (Western clawed frog).